We begin with the raw amino-acid sequence, 199 residues long: Imidazoleglycerol-phosphate dehydratase (199 aa).

This sequence belongs to the imidazoleglycerol-phosphate dehydratase family.

The protein resides in the cytoplasm. It catalyses the reaction D-erythro-1-(imidazol-4-yl)glycerol 3-phosphate = 3-(imidazol-4-yl)-2-oxopropyl phosphate + H2O. It functions in the pathway amino-acid biosynthesis; L-histidine biosynthesis; L-histidine from 5-phospho-alpha-D-ribose 1-diphosphate: step 6/9. This Methylibium petroleiphilum (strain ATCC BAA-1232 / LMG 22953 / PM1) protein is Imidazoleglycerol-phosphate dehydratase.